The following is a 553-amino-acid chain: MSTKTTIKSQTSHRGYSASSARVPGLNRSGFSSVSVCRSRGSGGSSAMCGGAGFGSRSLYGVGSSKRISIGGGSCGIGGGYGSRFGGSFGIGGGAGSGFGFGGGAGFGGGYGGAGFPVCPPGGIQEVTINQSLLTPLNLQIDPTIQRVRTEEREQIKTLNNKFASFIDKVRFLEQQNKVLDTKWALLQEQGTKTVRQNLEPMFEQYISNLRRQLDSIIGERGRLDSELRNMQDTVEDYKSKYEDEINKRTAAENEFVTLKKDVDAAYMNKVELQAKADSLTDDINFLRALYEAELSQMQTHISDTSVVLSMDNNRSLDLDSIIAEVKAQYEDIAQRSRAEAESWYQTKYEELQVTAGRHGDDLRNTKQEIAEINRMIQRLRSEIDHVKKQCANLQAAIADAEQRGEMALKDARGKLEGLEDALQKAKQDMARLLKEYQELMNVKLALDVEIATYRKLLEGEECRLNGEGVGPVNISVVQSTVSSGYGSAGGASSSLGLGGGSSYSYSSSHGLGGGFSAGSGRAIGGGLSSSGGLSSSTIKYTTTSSSKKSYRQ.

Polar residues predominate over residues 1–20 (MSTKTTIKSQTSHRGYSASS). The disordered stretch occupies residues 1–21 (MSTKTTIKSQTSHRGYSASSA). Residues 1–151 (MSTKTTIKSQ…DPTIQRVRTE (151 aa)) form a head region. The interval 152–187 (EREQIKTLNNKFASFIDKVRFLEQQNKVLDTKWALL) is coil 1A. Residues 152-465 (EREQIKTLNN…KLLEGEECRL (314 aa)) form the IF rod domain. Residues 188 to 206 (QEQGTKTVRQNLEPMFEQY) are linker 1. The segment at 207-298 (ISNLRRQLDS…ALYEAELSQM (92 aa)) is coil 1B. Residues 299–322 (QTHISDTSVVLSMDNNRSLDLDSI) are linker 12. The interval 323-461 (IAEVKAQYED…ATYRKLLEGE (139 aa)) is coil 2. Positions 462-553 (ECRLNGEGVG…TSSSKKSYRQ (92 aa)) are tail. Residues 528–553 (LSSSGGLSSSTIKYTTTSSSKKSYRQ) are disordered. A compositionally biased stretch (low complexity) spans 531–553 (SGGLSSSTIKYTTTSSSKKSYRQ).

The protein belongs to the intermediate filament family. Heterodimer of a type I and a type II keratin. KRT6 isomers associate with KRT16 and/or KRT17. Interacts with TCHP. Predominates in the adult trunk skin, tongue, trachea/esophagus and eye. In adult skin, localization is restricted to hair follicles, where it is localized predominantly in the outer root sheath.

In terms of biological role, epidermis-specific type I keratin involved in wound healing. Involved in the activation of follicular keratinocytes after wounding, while it does not play a major role in keratinocyte proliferation or migration. Participates in the regulation of epithelial migration by inhibiting the activity of SRC during wound repair. The polypeptide is Keratin, type II cytoskeletal 6A (Krt6a) (Mus musculus (Mouse)).